Consider the following 331-residue polypeptide: NAD-dependent protein deacetylase HST2 (331 aa).

Residues 1–262 (MPSLDDILKP…EKLCTLLGLD (262 aa)) form the Deacetylase sirtuin-type domain. Residues 26–46 (GAGI…TGLY) and 109–112 (QNID) contribute to the NAD(+) site. Histidine 129 functions as the Proton acceptor in the catalytic mechanism. Zn(2+) is bound by residues cysteine 137, cysteine 140, cysteine 161, and cysteine 164. NAD(+) is bound by residues 201-203 (GTS), 226-228 (NKE), and cysteine 248. Residues 276 to 331 (YSKAETKETKMHEIEDKLKEEAHLKEDKHTTKVDKKEKQNDANDKELEQLIDKLKI) are a coiled coil. The interval 283–319 (ETKMHEIEDKLKEEAHLKEDKHTTKVDKKEKQNDAND) is disordered.

The protein belongs to the sirtuin family. Class I subfamily. Zn(2+) serves as cofactor.

Its subcellular location is the cytoplasm. It is found in the nucleus. The catalysed reaction is N(6)-acetyl-L-lysyl-[protein] + NAD(+) + H2O = 2''-O-acetyl-ADP-D-ribose + nicotinamide + L-lysyl-[protein]. NAD-dependent histone deacetylase that is involved in nuclear silencing events. Derepresses subtelomeric silencing and increases repression in nucleolar (rDNA) silencing. Its function is negatively regulated by active nuclear export. This chain is NAD-dependent protein deacetylase HST2 (HST2), found in Candida albicans (strain SC5314 / ATCC MYA-2876) (Yeast).